The sequence spans 207 residues: Large ribosomal subunit protein uL4 (207 aa).

The segment at 49-78 (HAVKNRSAVSGGGRKPWRQKGTGRARQGSI) is disordered.

This sequence belongs to the universal ribosomal protein uL4 family. As to quaternary structure, part of the 50S ribosomal subunit.

In terms of biological role, one of the primary rRNA binding proteins, this protein initially binds near the 5'-end of the 23S rRNA. It is important during the early stages of 50S assembly. It makes multiple contacts with different domains of the 23S rRNA in the assembled 50S subunit and ribosome. Its function is as follows. Forms part of the polypeptide exit tunnel. In Streptococcus pneumoniae serotype 19F (strain G54), this protein is Large ribosomal subunit protein uL4.